The following is a 274-amino-acid chain: Transcription factor MYB58 (274 aa).

HTH myb-type domains follow at residues 11-63 and 64-118; these read KTKV…INYL and RPDV…KKRL. 2 DNA-binding regions (H-T-H motif) span residues 39–63 and 91–114; these read WRSL…INYL and WSKI…HTHL. Disordered stretches follow at residues 121–160 and 237–274; these read ETNL…ISSK and SELG…LLIH. Low complexity predominate over residues 263–274; it reads SSLLESYELLIH.

As to expression, expressed in leaves. Specifically expressed in fibers and vessels undergoing secondary wall thickening, especially in inflorescence stems.

It is found in the nucleus. Transcriptional activator that binds DNA to the AC cis-elements 5'-ACCTACC-3', 5'-ACCAACC-3' and 5'-ACCTAAC-3' of promoters and specifically activates lignin biosynthetic genes during secondary wall formation mediated by SND1. The protein is Transcription factor MYB58 of Arabidopsis thaliana (Mouse-ear cress).